A 287-amino-acid polypeptide reads, in one-letter code: MGEEEEKKEKGDEIITAVYKVHLHCRKCACDIKKPLLRFQGVQNVDFDLEKNEIKVKGKIEVVKIHKQIEKWSKKKVELISPKPSEVKKTTTTTTTTSVVEKKTTEIKKDVIRTTVLKVHIHCAQCDKDLQHKLLKHKAIHIVKTDTKAQTLTVQGTIESAKLLAYIKKKVHKHAEIISSKTEEEKKKEEEDKKKKEEEDKKKKEDEKKKEEEKKKEEENKKKEGEKKKEEVKVEVTTKTITQVVEYKEIVKVEGQKDKDGNIPYFVHYVYAPQLFSDENPNACRIV.

HMA domains are found at residues 14–80 (IITA…VELI) and 112–176 (IRTT…KHAE). The a metal cation site is built by C25, C28, C123, and C126. A coiled-coil region spans residues 179 to 235 (SSKTEEEKKKEEEDKKKKEEEDKKKKEDEKKKEEEKKKEEENKKKEGEKKKEEVKVE). The interval 181-232 (KTEEEKKKEEEDKKKKEEEDKKKKEDEKKKEEEKKKEEENKKKEGEKKKEEV) is disordered. C284 is modified (cysteine methyl ester). C284 carries the S-farnesyl cysteine lipid modification. A propeptide spans 285–287 (RIV) (removed in mature form).

It belongs to the HIPP family.

Its function is as follows. Heavy-metal-binding protein. The chain is Heavy metal-associated isoprenylated plant protein 4 from Arabidopsis thaliana (Mouse-ear cress).